A 158-amino-acid chain; its full sequence is C-type lectin BfL-2 (158 aa).

Positions M1–A21 are cleaved as a signal peptide. Disulfide bonds link C26–C37, C54–C154, C61–C156, and C129–C146. Residues K33–Q155 enclose the C-type lectin domain. The Mannose-binding signature appears at E119–N121. The N-linked (GlcNAc...) asparagine glycan is linked to N121. Residues E127, N142, and D143 each contribute to the Ca(2+) site.

The protein belongs to the true venom lectin family. As to quaternary structure, homodimer; non-covalently linked. In terms of tissue distribution, expressed by the venom gland.

The protein resides in the secreted. Functionally, mannose-binding lectin which recognizes specific carbohydrate structures and agglutinates a variety of animal cells by binding to cell-surface glycoproteins and glycolipids. May be a calcium-dependent lectin. This is C-type lectin BfL-2 from Bungarus fasciatus (Banded krait).